Here is a 131-residue protein sequence, read N- to C-terminus: Protein Turandot M (131 aa).

A signal peptide spans methionine 1–alanine 23.

It belongs to the Turandot family.

The protein resides in the secreted. Its function is as follows. A humoral factor that may play a role in stress tolerance. Requires Mekk1 expression in the fat body to regulate response to septic injury and consequent immune response. This Drosophila melanogaster (Fruit fly) protein is Protein Turandot M.